We begin with the raw amino-acid sequence, 359 residues long: Pheromone receptor 1 (359 aa).

Transmembrane regions (helical) follow at residues 5–25 (VTPF…GWHI), 33–53 (ITLS…SVAW), 71–87 (LRHA…LVIA), 110–130 (IIID…LMIV), 147–167 (FLSL…IVSF), 206–226 (LLVL…GSVS), and 268–288 (LILS…MFGL). The interval 335–359 (TSGGIDGSPHSEKFSINTPTKYEEA) is disordered. The span at 348–359 (FSINTPTKYEEA) shows a compositional bias: polar residues.

Belongs to the G-protein coupled receptor 4 family.

It is found in the membrane. Receptor for the A2 pheromone, a prenylated mating factor. In Ustilago hordei (Barley covered smut fungus), this protein is Pheromone receptor 1 (PRA1).